A 482-amino-acid chain; its full sequence is 2-succinylbenzoate--CoA ligase (482 aa).

This sequence belongs to the ATP-dependent AMP-binding enzyme family. MenE subfamily.

The enzyme catalyses 2-succinylbenzoate + ATP + CoA = 2-succinylbenzoyl-CoA + AMP + diphosphate. It participates in quinol/quinone metabolism; 1,4-dihydroxy-2-naphthoate biosynthesis; 1,4-dihydroxy-2-naphthoate from chorismate: step 5/7. It functions in the pathway quinol/quinone metabolism; menaquinone biosynthesis. In terms of biological role, converts 2-succinylbenzoate (OSB) to 2-succinylbenzoyl-CoA (OSB-CoA). The chain is 2-succinylbenzoate--CoA ligase from Bacillus cereus (strain ZK / E33L).